The primary structure comprises 403 residues: Imidazolonepropionase (403 aa).

Fe(3+) contacts are provided by His68 and His70. His68 and His70 together coordinate Zn(2+). 4-imidazolone-5-propanoate-binding residues include Arg77, Tyr140, and His173. Tyr140 serves as a coordination point for N-formimidoyl-L-glutamate. A Fe(3+)-binding site is contributed by His238. His238 serves as a coordination point for Zn(2+). Gln241 is a binding site for 4-imidazolone-5-propanoate. Asp313 lines the Fe(3+) pocket. A Zn(2+)-binding site is contributed by Asp313. 2 residues coordinate N-formimidoyl-L-glutamate: Asn315 and Gly317. Ser318 is a 4-imidazolone-5-propanoate binding site.

The protein belongs to the metallo-dependent hydrolases superfamily. HutI family. Zn(2+) serves as cofactor. The cofactor is Fe(3+).

It is found in the cytoplasm. It catalyses the reaction 4-imidazolone-5-propanoate + H2O = N-formimidoyl-L-glutamate. It functions in the pathway amino-acid degradation; L-histidine degradation into L-glutamate; N-formimidoyl-L-glutamate from L-histidine: step 3/3. Functionally, catalyzes the hydrolytic cleavage of the carbon-nitrogen bond in imidazolone-5-propanoate to yield N-formimidoyl-L-glutamate. It is the third step in the universal histidine degradation pathway. This is Imidazolonepropionase from Hahella chejuensis (strain KCTC 2396).